Reading from the N-terminus, the 415-residue chain is MKGSYKSRWVIVIVVVIAAIAAFWFWQGRNDSQSAAPGATKQAQQSPAGGRRGMRSGPLAPVQAATAVEQAVPRYLTGLGTITAANTVTVRSRVDGQLMALHFQEGQQVKAGDLLAEIDPSQFKVALAQAQGQLAKDKATLANARRDLARYQQLAKTNLVSRQELDAQQALVSETEGTIKADEASVASAQLQLDWSRITAPVDGRVGLKQVDVGNQISSGDTTGIVVITQTHPIDLVFTLPESDIATVVQAQKAGKPLVVEAWDRTNSKKLSEGTLLSLDNQIDATTGTIKVKARFNNQDDALFPNQFVNARMLVDTEQNAVVIPTAALQMGNEGHFVWVLNSENKVSKHLVTPGIQDSQKVVIRAGISAGDRVVTDGIDRLTEGAKVEVVEAQSATTPEEKATSREYAKKGARS.

An N-terminal signal peptide occupies residues 1 to 21 (MKGSYKSRWVIVIVVVIAAIA). Over residues 31–47 (DSQSAAPGATKQAQQSP) the composition is skewed to polar residues. Disordered stretches follow at residues 31–60 (DSQSAAPGATKQAQQSPAGGRRGMRSGPLA) and 392–415 (EAQSATTPEEKATSREYAKKGARS). The span at 399-415 (PEEKATSREYAKKGARS) shows a compositional bias: basic and acidic residues.

Belongs to the membrane fusion protein (MFP) (TC 8.A.1) family. Part of a tripartite efflux system composed of MdtA, MdtB and MdtC.

Its subcellular location is the cell inner membrane. Its function is as follows. The MdtABC tripartite complex confers resistance against novobiocin and deoxycholate. This Escherichia coli O8 (strain IAI1) protein is Multidrug resistance protein MdtA.